A 113-amino-acid chain; its full sequence is Large ribosomal subunit protein uL22 (113 aa).

This sequence belongs to the universal ribosomal protein uL22 family. Part of the 50S ribosomal subunit.

In terms of biological role, this protein binds specifically to 23S rRNA; its binding is stimulated by other ribosomal proteins, e.g. L4, L17, and L20. It is important during the early stages of 50S assembly. It makes multiple contacts with different domains of the 23S rRNA in the assembled 50S subunit and ribosome. The globular domain of the protein is located near the polypeptide exit tunnel on the outside of the subunit, while an extended beta-hairpin is found that lines the wall of the exit tunnel in the center of the 70S ribosome. This chain is Large ribosomal subunit protein uL22, found in Roseiflexus sp. (strain RS-1).